The following is an 827-amino-acid chain: Probable beta-glucosidase H (827 aa).

Aspartate 223 is a catalytic residue. A PA14 domain is found at 387 to 546 (RLLTNAVMHF…DSAEMVRSAV (160 aa)). 4 N-linked (GlcNAc...) asparagine glycosylation sites follow: asparagine 471, asparagine 594, asparagine 600, and asparagine 625.

The protein belongs to the glycosyl hydrolase 3 family.

The protein localises to the secreted. The enzyme catalyses Hydrolysis of terminal, non-reducing beta-D-glucosyl residues with release of beta-D-glucose.. The protein operates within glycan metabolism; cellulose degradation. Functionally, beta-glucosidases are one of a number of cellulolytic enzymes involved in the degradation of cellulosic biomass. Catalyzes the last step releasing glucose from the inhibitory cellobiose. The chain is Probable beta-glucosidase H (bglH) from Aspergillus flavus (strain ATCC 200026 / FGSC A1120 / IAM 13836 / NRRL 3357 / JCM 12722 / SRRC 167).